The primary structure comprises 419 residues: Maltoporin 2 (419 aa).

Residues 1-23 form the signal peptide; the sequence is MKTSLRTLSVALAAALVSPSVLA.

It belongs to the porin LamB (TC 1.B.3) family. In terms of assembly, homotrimer formed of three 18-stranded antiparallel beta-barrels, containing three independent channels.

It is found in the cell outer membrane. It catalyses the reaction beta-maltose(in) = beta-maltose(out). Its function is as follows. Involved in the transport of maltose and maltodextrins. The chain is Maltoporin 2 from Yersinia pestis bv. Antiqua (strain Antiqua).